Reading from the N-terminus, the 572-residue chain is Hemagglutinin-neuraminidase (572 aa).

The Intravirion segment spans residues 1–31 (MEYWKHTNHRKDAGNELETSMATHGNKLTNK). The helical transmembrane segment at 32–52 (ITYILWTIILVLLSIVLIIVL) threads the bilayer. The Virion surface portion of the chain corresponds to 53–572 (INSIKSEKAH…FKTEVPKSCS (520 aa)). Cystine bridges form between Cys-190–Cys-214 and Cys-256–Cys-269. Positions 252–257 (NRKSCS) are involved in neuraminidase activity. 2 N-linked (GlcNAc...) asparagine; by host glycosylation sites follow: Asn-308 and Asn-351. 2 disulfides stabilise this stretch: Cys-355–Cys-469 and Cys-463–Cys-473. N-linked (GlcNAc...) asparagine; by host glycosylation is present at Asn-523. Residues Cys-535 and Cys-544 are joined by a disulfide bond.

This sequence belongs to the paramyxoviruses hemagglutinin-neuraminidase family. Homotetramer; composed of disulfide-linked homodimers. Interacts with F protein trimer.

The protein localises to the virion membrane. The protein resides in the host cell membrane. The enzyme catalyses Hydrolysis of alpha-(2-&gt;3)-, alpha-(2-&gt;6)-, alpha-(2-&gt;8)- glycosidic linkages of terminal sialic acid residues in oligosaccharides, glycoproteins, glycolipids, colominic acid and synthetic substrates.. In terms of biological role, attaches the virus to sialic acid-containing cell receptors and thereby initiating infection. Binding of HN protein to the receptor induces a conformational change that allows the F protein to trigger virion/cell membranes fusion. Functionally, neuraminidase activity ensures the efficient spread of the virus by dissociating the mature virions from the neuraminic acid containing glycoproteins. This is Hemagglutinin-neuraminidase (HN) from Human parainfluenza 3 virus (strain Tex/9305/82) (HPIV-3).